A 1643-amino-acid chain; its full sequence is DNA-directed RNA polymerase subunit beta' (1643 aa).

4 residues coordinate Zn(2+): Cys64, Cys66, Cys79, and Cys82. Mg(2+) is bound by residues Asp684, Asp686, and Asp688. Residues Cys1046, Cys1239, Cys1246, and Cys1249 each coordinate Zn(2+).

It belongs to the RNA polymerase beta' chain family. As to quaternary structure, the RNAP catalytic core consists of 2 alpha, 1 beta, 1 beta' and 1 omega subunit. When a sigma factor is associated with the core the holoenzyme is formed, which can initiate transcription. Mg(2+) is required as a cofactor. It depends on Zn(2+) as a cofactor.

It carries out the reaction RNA(n) + a ribonucleoside 5'-triphosphate = RNA(n+1) + diphosphate. In terms of biological role, DNA-dependent RNA polymerase catalyzes the transcription of DNA into RNA using the four ribonucleoside triphosphates as substrates. The sequence is that of DNA-directed RNA polymerase subunit beta' from Petrotoga mobilis (strain DSM 10674 / SJ95).